The chain runs to 1170 residues: DNA excision repair protein ERCC-5 (1170 aa).

The segment at 1–78 is N-domain; it reads MGVQGLWKLL…RIRPIFVFDG (78 aa). An N6-acetyllysine modification is found at Lys-8. Asp-30 is a binding site for Mg(2+). Positions 31–67 are DNA-binding; may bind to the undamaged single-strand DNA of the DNA repair bubble; sequence ISIWLNQALKGVRDSHGNVIENAHLLTLFHRLCKLLF. Position 77 (Asp-77) interacts with Mg(2+). Residues 79-784 are spacer region; sequence DAPLLKKQTL…LRLFGVPYIQ (706 aa). 3 disordered regions span residues 304–479, 520–587, and 600–701; these read DSES…RCDT, HVSG…PKAC, and LENA…ECLL. Over residues 306 to 323 the composition is skewed to low complexity; sequence ESLPSSSNVHSVSSNLKS. 2 stretches are compositionally biased toward basic and acidic residues: residues 324-336 and 363-373; these read SPHE…REPE and SREGRQSKERN. Ser-384 bears the Phosphoserine mark. A compositionally biased stretch (polar residues) spans 455–474; it reads TSGSSANGQTDSAHSFTTAS. The segment covering 539–551 has biased composition (basic and acidic residues); the sequence is THSDQGIDIHPED. Polar residues predominate over residues 659 to 676; the sequence is SVVSNSELQTESSEASTH. Residues 677 to 698 show a composition bias toward basic and acidic residues; that stretch reads LSEKDAEEPRETLEEGTSRDTE. Ser-704 and Ser-705 each carry phosphoserine. The interval 785–880 is I-domain; the sequence is APMEAEAQCA…VTAMEILNEF (96 aa). 4 residues coordinate Mg(2+): Glu-788, Glu-790, Asp-809, and Asp-811. The interval 819–835 is DNA-binding; may bind to the undamaged single-strand DNA of the DNA repair bubble; it reads HVYKNFFNKNKFVEYYQ. The segment at 847 to 879 is DNA-binding; H2TH (helix-2turn-helix) motif which binds double-stranded DNA; sequence RNKLINLAYLLGSDYTEGIPTVGCVTAMEILNE. Asp-860 serves as a coordination point for Mg(2+). Residues 911–917 are DNA-binding; may bind double-stranded DNA; that stretch reads TKVKKKL. The interval 980 to 1008 is interaction with PCNA; the sequence is LKHLNAHQTQLRIDSFFRLAQQEKQDAKL. Residues 1010–1170 form an interaction with ERCC6/CSB region; the sequence is KSHRLNRAVT…KSMKRRKKKT (161 aa). The tract at residues 1033-1146 is disordered; that stretch reads LTKVTEALDD…DDEDKAKTVL (114 aa). Basic and acidic residues predominate over residues 1041–1060; the sequence is DDAKGKTQKRELPYKKETSV. A Nuclear localization signal 1 motif is present at residues 1049-1065; the sequence is KRELPYKKETSVPKRRR. The span at 1094-1110 shows a compositional bias: polar residues; it reads SVMSARQRSAAESSKIS. Positions 1153 to 1170 match the Nuclear localization signal 2 motif; the sequence is FGKKKLKLKSMKRRKKKT.

The protein belongs to the XPG/RAD2 endonuclease family. XPG subfamily. Monomer. Homodimer. Component of the homologous recombination repair (HR) complex composed of ERCC5/XPG, BRCA2, PALB2, DSS1 and RAD51. Within the complex, interacts with BRCA2 and PALB2. Interacts with RNA polymerase II. Interacts (via C-terminus) with ERCC6/CSB; the interaction stimulates ERCC6/CSB binding to the DNA repair bubble and ERCC6/CSB ATPase activity. May form a complex composed of RNA polymerase II, ERCC6/CSB and ERCC5/XPG which associates with the DNA repair bubble during transcription-coupled nucleotide excision repair. Interacts with BRCA1; the interaction promotes the release of BRCA1 from DNA. Interacts with PCNA. Interacts with NTHL1; the interaction stimulates NTHL1 activity and NTHL1 binding to its DNA substrate. Mg(2+) serves as cofactor.

The protein localises to the nucleus. The protein resides in the chromosome. Its function is as follows. Single-stranded structure-specific DNA endonuclease involved in DNA excision repair. Makes the 3'incision in DNA nucleotide excision repair (NER). Binds and bends DNA repair bubble substrate and breaks base stacking at the single-strand/double-strand DNA junction of the DNA bubble. Plays a role in base excision repair (BER) by promoting the binding of DNA glycosylase NTHL1 to its substrate and increasing NTHL1 catalytic activity that removes oxidized pyrimidines from DNA. Involved in transcription-coupled nucleotide excision repair (TCR) which allows RNA polymerase II-blocking lesions to be rapidly removed from the transcribed strand of active genes. Functions during the initial step of TCR in cooperation with ERCC6/CSB to recognized stalled RNA polymerase II. Also, stimulates ERCC6/CSB binding to the DNA repair bubble and ERCC6/CSB ATPase activity. Required for DNA replication fork maintenance and preservation of genomic stability. Involved in homologous recombination repair (HRR) induced by DNA replication stress by recruiting RAD51, BRCA2, and PALB2 to the damaged DNA site. During HRR, binds to the replication fork with high specificity and stabilizes it. Also, acts upstream of HRR, to promote the release of BRCA1 from DNA. This Mus musculus (Mouse) protein is DNA excision repair protein ERCC-5 (Ercc5).